The sequence spans 490 residues: NAD/NADP-dependent betaine aldehyde dehydrogenase (490 aa).

K(+) contacts are provided by Thr-26, Ile-27, and Asp-93. Residue 150-153 (GAWN) coordinates NADPH. Lys-162 (charge relay system) is an active-site residue. 176 to 179 (KPSE) lines the NADPH pocket. Val-180 is a binding site for K(+). Residues Gly-209 and 230 to 233 (GTST) each bind NADPH. Leu-246 provides a ligand contact to K(+). The active-site Proton acceptor is Glu-252. Residues Cys-286 and Glu-387 each coordinate NADPH. The active-site Nucleophile is Cys-286. At Cys-286 the chain carries Cysteine sulfenic acid (-SOH). K(+) is bound by residues Lys-457 and Gly-460. Residue Glu-464 is the Charge relay system of the active site.

It belongs to the aldehyde dehydrogenase family. In terms of assembly, dimer of dimers. It depends on K(+) as a cofactor.

The enzyme catalyses betaine aldehyde + NAD(+) + H2O = glycine betaine + NADH + 2 H(+). It catalyses the reaction betaine aldehyde + NADP(+) + H2O = glycine betaine + NADPH + 2 H(+). Its pathway is amine and polyamine biosynthesis; betaine biosynthesis via choline pathway; betaine from betaine aldehyde: step 1/1. Its function is as follows. Involved in the biosynthesis of the osmoprotectant glycine betaine. Catalyzes the irreversible oxidation of betaine aldehyde to the corresponding acid. In P.aeruginosa this reaction is a compulsory step in the assimilation of carbon and nitrogen when bacteria are growing in choline or choline precursors. Can use NADP(+) with similar efficiency to NAD(+), a property that can be used by the bacterium to produce the NADPH needed to combat the oxidative stress imposed by the host defenses. The protein is NAD/NADP-dependent betaine aldehyde dehydrogenase of Pseudomonas aeruginosa (strain ATCC 15692 / DSM 22644 / CIP 104116 / JCM 14847 / LMG 12228 / 1C / PRS 101 / PAO1).